A 97-amino-acid chain; its full sequence is MEQAPEDQGPQREPHNEWTLELLEELKREAVRHFPRPWLHGLGQHIYETYGDTWAGVEAIIRILQQLLFIHFRIGCQHSRIGIIQQRRARRNGASRS.

The interval 1–42 is homooligomerization; the sequence is MEQAPEDQGPQREPHNEWTLELLEELKREAVRHFPRPWLHGL. Residues S79, S95, and S97 each carry the phosphoserine; by host modification.

The protein belongs to the HIV-1 VPR protein family. Homooligomer, may form homodimer. Interacts with p6-gag region of the Pr55 Gag precursor protein through a (Leu-X-X)4 motif near the C-terminus of the P6gag protein. Interacts with host UNG. May interact with host RAD23A/HHR23A. Interacts with host VPRBP/DCAF1, leading to hijack the CUL4A-RBX1-DDB1-DCAF1/VPRBP complex, mediating ubiquitination of host proteins such as TERT and ZGPAT and arrest of the cell cycle in G2 phase. Post-translationally, phosphorylated on several residues by host. These phosphorylations regulate VPR activity for the nuclear import of the HIV-1 pre-integration complex.

It is found in the virion. Its subcellular location is the host nucleus. It localises to the host extracellular space. In terms of biological role, during virus replication, may deplete host UNG protein, and incude G2-M cell cycle arrest. Acts by targeting specific host proteins for degradation by the 26S proteasome, through association with the cellular CUL4A-DDB1 E3 ligase complex by direct interaction with host VPRPB/DCAF-1. Cell cycle arrest reportedly occurs within hours of infection and is not blocked by antiviral agents, suggesting that it is initiated by the VPR carried into the virion. Additionally, VPR induces apoptosis in a cell cycle dependent manner suggesting that these two effects are mechanistically linked. Detected in the serum and cerebrospinal fluid of AIDS patient, VPR may also induce cell death to bystander cells. Its function is as follows. During virus entry, plays a role in the transport of the viral pre-integration (PIC) complex to the host nucleus. This function is crucial for viral infection of non-dividing macrophages. May act directly at the nuclear pore complex, by binding nucleoporins phenylalanine-glycine (FG)-repeat regions. The polypeptide is Protein Vpr (Human immunodeficiency virus type 1 group M subtype B (isolate YU-2) (HIV-1)).